The primary structure comprises 729 residues: Catalase-peroxidase (729 aa).

The tryptophyl-tyrosyl-methioninium (Trp-Tyr) (with M-244) cross-link spans 95 to 218 (WHSAGTYRGA…LAAVEMGLVY (124 aa)). The active-site Proton acceptor is H96. The tryptophyl-tyrosyl-methioninium (Tyr-Met) (with W-95) cross-link spans 218–244 (YVNPEGPHGHPDPVASGPDVRDTFARM). H259 is a binding site for heme b.

Belongs to the peroxidase family. Peroxidase/catalase subfamily. Homodimer or homotetramer. Heme b serves as cofactor. In terms of processing, formation of the three residue Trp-Tyr-Met cross-link is important for the catalase, but not the peroxidase activity of the enzyme.

The catalysed reaction is H2O2 + AH2 = A + 2 H2O. The enzyme catalyses 2 H2O2 = O2 + 2 H2O. Functionally, bifunctional enzyme with both catalase and broad-spectrum peroxidase activity. This chain is Catalase-peroxidase, found in Synechococcus sp. (strain CC9605).